The chain runs to 174 residues: RNA pyrophosphohydrolase (174 aa).

In terms of domain architecture, Nudix hydrolase spans 6–149 (GYRPNVGIIL…KRDVYLGALK (144 aa)). Positions 38 to 59 (GGIKPGESPETAMYRELYEEVG) match the Nudix box motif.

It belongs to the Nudix hydrolase family. RppH subfamily. A divalent metal cation is required as a cofactor.

Accelerates the degradation of transcripts by removing pyrophosphate from the 5'-end of triphosphorylated RNA, leading to a more labile monophosphorylated state that can stimulate subsequent ribonuclease cleavage. The polypeptide is RNA pyrophosphohydrolase (Neisseria meningitidis serogroup C (strain 053442)).